The sequence spans 148 residues: MHLAYPAVLAALLFCVGLYGVLARRNAILVLMSVELMLNAVNLNLVAFDVWLRDTLHSGQALTLFTIAIAAAEIGIGLAIVLAVYRNRGTSAIDRLRDTAETDAAETLPDDAGTGPSGTDAAPNGDTTTATGRPGDNAGKNKKAEATR.

Helical transmembrane passes span 3–23 (LAYP…GVLA), 28–48 (ILVL…LVAF), and 64–84 (LFTI…VLAV). A disordered region spans residues 96-148 (LRDTAETDAAETLPDDAGTGPSGTDAAPNGDTTTATGRPGDNAGKNKKAEATR).

This sequence belongs to the complex I subunit 4L family. In terms of assembly, NDH-1 is composed of 14 different subunits. Subunits NuoA, H, J, K, L, M, N constitute the membrane sector of the complex.

It is found in the cell membrane. The enzyme catalyses a quinone + NADH + 5 H(+)(in) = a quinol + NAD(+) + 4 H(+)(out). In terms of biological role, NDH-1 shuttles electrons from NADH, via FMN and iron-sulfur (Fe-S) centers, to quinones in the respiratory chain. The immediate electron acceptor for the enzyme in this species is believed to be a menaquinone. Couples the redox reaction to proton translocation (for every two electrons transferred, four hydrogen ions are translocated across the cytoplasmic membrane), and thus conserves the redox energy in a proton gradient. The sequence is that of NADH-quinone oxidoreductase subunit K 2 from Streptomyces griseus subsp. griseus (strain JCM 4626 / CBS 651.72 / NBRC 13350 / KCC S-0626 / ISP 5235).